A 169-amino-acid chain; its full sequence is Disulfide bond formation protein B (169 aa).

At 1–14 (MMRFLNHCSQGRSA) the chain is on the cytoplasmic side. The helical transmembrane segment at 15-31 (WLLMILTALILESSALY) threads the bilayer. At 32–49 (FQHVMKLQPCVMCIYERV) the chain is on the periplasmic side. A disulfide bridge links cysteine 41 with cysteine 44. Residues 50–65 (ALFGVLSAGILGVIAP) traverse the membrane as a helical segment. The Cytoplasmic portion of the chain corresponds to 66-71 (KTPLRW). Residues 72–89 (LAIILWIYSAWGGLQLAW) traverse the membrane as a helical segment. Topologically, residues 90–144 (QHTMMQLHPSPFNTCDFFVNFPSWLALNQWLPSVFEATGDCSVRQWQFLTLEMPQ) are periplasmic. Cysteine 104 and cysteine 130 are oxidised to a cystine. The chain crosses the membrane as a helical span at residues 145–163 (WLVGIFAAYLVVAALVLIS). Over 164-169 (QFFSRK) the chain is Cytoplasmic.

The protein belongs to the DsbB family.

Its subcellular location is the cell inner membrane. Functionally, required for disulfide bond formation in some periplasmic proteins. Acts by oxidizing the DsbA protein. The polypeptide is Disulfide bond formation protein B (Photorhabdus laumondii subsp. laumondii (strain DSM 15139 / CIP 105565 / TT01) (Photorhabdus luminescens subsp. laumondii)).